Consider the following 709-residue polypeptide: Dual specificity calcium/calmodulin-dependent 3',5'-cyclic nucleotide phosphodiesterase 1C (709 aa).

Met1 bears the N-acetylmethionine mark. The calmodulin-binding stretch occupies residues 123 to 146 (EKPRFKSIVHAVQAGIFVERMYRR). The 378-residue stretch at 151–528 (VGLSYPPAVI…ERWRAKVPKE (378 aa)) folds into the PDEase domain. The active-site Proton donor is the His228. Zn(2+)-binding residues include His232, His268, Asp269, and Asp376. Position 269 (Asp269) interacts with Mg(2+). Disordered regions lie at residues 453–495 (LIDE…APIN) and 523–650 (AKVP…TCRL). The segment covering 483–495 (VKTSGSEGSAPIN) has biased composition (polar residues). The span at 523-556 (AKVPKEEKAKKEAEEKARLAAEEQQKEMEAKSQA) shows a compositional bias: basic and acidic residues. Positions 571-581 (ETKNQVNGTRA) are enriched in polar residues. 2 stretches are compositionally biased toward basic and acidic residues: residues 582–598 (NKSD…EKSS) and 606–633 (DFKD…DGTK).

This sequence belongs to the cyclic nucleotide phosphodiesterase family. PDE1 subfamily. Homodimer. Requires Zn(2+) as cofactor. It depends on Mg(2+) as a cofactor. In terms of tissue distribution, isoform PDE1C2 is present in the heart and brain and, at lower levels in the lung, liver, kidney and skeletal muscle. Isoform PDE1C1 is expressed in the heart and brain and, at lower levels in lung. Also expressed at low levels in uterus and testis.

It is found in the lysosome. The enzyme catalyses a nucleoside 3',5'-cyclic phosphate + H2O = a nucleoside 5'-phosphate + H(+). It catalyses the reaction 3',5'-cyclic GMP + H2O = GMP + H(+). It carries out the reaction 3',5'-cyclic AMP + H2O = AMP + H(+). Type I PDE are activated by the binding of calmodulin in the presence of Ca(2+). In terms of biological role, calmodulin-dependent cyclic nucleotide phosphodiesterase with a dual specificity for the second messengers cAMP and cGMP, which are key regulators of many important physiological processes. Has a high affinity for both cAMP and cGMP. Modulates the amplitude and duration of the cAMP signal in sensory cilia in response to odorant stimulation, hence contributing to the generation of action potentials. Regulates smooth muscle cell proliferation. Regulates the stability of growth factor receptors, including PDGFRB. This is Dual specificity calcium/calmodulin-dependent 3',5'-cyclic nucleotide phosphodiesterase 1C from Homo sapiens (Human).